The chain runs to 216 residues: Thiopurine S-methyltransferase (216 aa).

The S-adenosyl-L-methionine site is built by Trp10, Leu45, Glu66, and Arg123.

This sequence belongs to the class I-like SAM-binding methyltransferase superfamily. TPMT family.

Its subcellular location is the cytoplasm. It carries out the reaction S-adenosyl-L-methionine + a thiopurine = S-adenosyl-L-homocysteine + a thiopurine S-methylether.. The protein is Thiopurine S-methyltransferase of Pseudomonas putida (strain GB-1).